A 197-amino-acid polypeptide reads, in one-letter code: Endoribonuclease YbeY (197 aa).

3 residues coordinate Zn(2+): H156, H160, and H166.

Belongs to the endoribonuclease YbeY family. Requires Zn(2+) as cofactor.

The protein resides in the cytoplasm. In terms of biological role, single strand-specific metallo-endoribonuclease involved in late-stage 70S ribosome quality control and in maturation of the 3' terminus of the 16S rRNA. The sequence is that of Endoribonuclease YbeY from Cupriavidus metallidurans (strain ATCC 43123 / DSM 2839 / NBRC 102507 / CH34) (Ralstonia metallidurans).